The following is a 335-amino-acid chain: Anthranilate phosphoribosyltransferase (335 aa).

5-phospho-alpha-D-ribose 1-diphosphate is bound by residues G79, 82-83 (GD), T87, 89-92 (NIST), 107-115 (KHGSRSVSS), and S119. G79 is an anthranilate binding site. Mg(2+) is bound at residue S91. Position 165 (R165) interacts with anthranilate. Positions 223 and 224 each coordinate Mg(2+).

The protein belongs to the anthranilate phosphoribosyltransferase family. Homodimer. The cofactor is Mg(2+).

The catalysed reaction is N-(5-phospho-beta-D-ribosyl)anthranilate + diphosphate = 5-phospho-alpha-D-ribose 1-diphosphate + anthranilate. It participates in amino-acid biosynthesis; L-tryptophan biosynthesis; L-tryptophan from chorismate: step 2/5. Functionally, catalyzes the transfer of the phosphoribosyl group of 5-phosphorylribose-1-pyrophosphate (PRPP) to anthranilate to yield N-(5'-phosphoribosyl)-anthranilate (PRA). The chain is Anthranilate phosphoribosyltransferase from Helicobacter pylori (strain G27).